Reading from the N-terminus, the 37-residue chain is Large ribosomal subunit protein bL36 (37 aa).

This sequence belongs to the bacterial ribosomal protein bL36 family.

The polypeptide is Large ribosomal subunit protein bL36 (Mesomycoplasma hyopneumoniae (strain 7448) (Mycoplasma hyopneumoniae)).